The chain runs to 253 residues: Vitamin B12 import ATP-binding protein BtuD (253 aa).

The ABC transporter domain occupies 3–237; the sequence is LDAKNLAMPP…EQLESTFATQ (235 aa). 31–38 is a binding site for ATP; the sequence is GPNGSGKS.

It belongs to the ABC transporter superfamily. Vitamin B12 importer (TC 3.A.1.13.1) family. In terms of assembly, the complex is composed of two ATP-binding proteins (BtuD), two transmembrane proteins (BtuC) and a solute-binding protein (BtuF).

It is found in the cell inner membrane. It catalyses the reaction an R-cob(III)alamin(out) + ATP + H2O = an R-cob(III)alamin(in) + ADP + phosphate + H(+). Its function is as follows. Part of the ABC transporter complex BtuCDF involved in vitamin B12 import. Responsible for energy coupling to the transport system. The polypeptide is Vitamin B12 import ATP-binding protein BtuD (Photobacterium profundum (strain SS9)).